Reading from the N-terminus, the 318-residue chain is 26 kDa endochitinase 1 (318 aa).

The signal sequence occupies residues 1 to 19; sequence MRAFVLFAVVAMAATMAVA. The Chitin-binding type-1 domain occupies 20–59; sequence EQCGSQAGGATCPNCLCCSRFGWCGSTPYCGDGCQSQCSG. Intrachain disulfides connect Cys-22-Cys-37, Cys-31-Cys-43, Cys-36-Cys-49, Cys-53-Cys-57, Cys-98-Cys-160, Cys-172-Cys-180, and Cys-279-Cys-311. The active-site Proton donor is the Glu-142.

Belongs to the glycosyl hydrolase 19 family. Chitinase class I subfamily.

It carries out the reaction Random endo-hydrolysis of N-acetyl-beta-D-glucosaminide (1-&gt;4)-beta-linkages in chitin and chitodextrins.. Functionally, defense against chitin-containing fungal pathogens. This Hordeum vulgare (Barley) protein is 26 kDa endochitinase 1.